A 286-amino-acid chain; its full sequence is Bifunctional protein FolD (286 aa).

NADP(+) is bound by residues 165 to 167 (GRS) and Ser-190.

Belongs to the tetrahydrofolate dehydrogenase/cyclohydrolase family. In terms of assembly, homodimer.

It catalyses the reaction (6R)-5,10-methylene-5,6,7,8-tetrahydrofolate + NADP(+) = (6R)-5,10-methenyltetrahydrofolate + NADPH. The catalysed reaction is (6R)-5,10-methenyltetrahydrofolate + H2O = (6R)-10-formyltetrahydrofolate + H(+). The protein operates within one-carbon metabolism; tetrahydrofolate interconversion. Functionally, catalyzes the oxidation of 5,10-methylenetetrahydrofolate to 5,10-methenyltetrahydrofolate and then the hydrolysis of 5,10-methenyltetrahydrofolate to 10-formyltetrahydrofolate. The protein is Bifunctional protein FolD of Burkholderia cenocepacia (strain ATCC BAA-245 / DSM 16553 / LMG 16656 / NCTC 13227 / J2315 / CF5610) (Burkholderia cepacia (strain J2315)).